Consider the following 692-residue polypeptide: Sulfhydryl oxidase 2 (692 aa).

Residues 1–38 (MAAARAVARDPGAYARQPPSLRAARLPRLLFLLAVVAA) form the signal peptide. One can recognise a Thioredoxin domain in the interval 54-172 (SDAVWLLDSG…RQTMIDFLQN (119 aa)). A glycan (N-linked (GlcNAc...) asparagine) is linked at Asn71. Active-site nucleophile residues include Cys85 and Cys88. 2 disulfides stabilise this stretch: Cys85–Cys88 and Cys116–Cys125. N-linked (GlcNAc...) asparagine glycosylation is found at Asn172, Asn212, and Asn260. An intrachain disulfide couples Cys412 to Cys424. An ERV/ALR sulfhydryl oxidase domain is found at 415–524 (SRLELRGYPC…EDPKFPKVPW (110 aa)). Residues Arg420, Trp427, His431, Glu472, His476, 499 to 506 (WRKHNMVN), Lys521, and Trp524 contribute to the FAD site. Cys470 and Cys473 form a disulfide bridge. Cysteines 530 and 533 form a disulfide. The disordered stretch occupies residues 568 to 607 (DQGSPGEWEAQGREQEEGKGLNPSGKSWRHHDTGSLRPPH). A compositionally biased stretch (basic and acidic residues) spans 577 to 586 (AQGREQEEGK). The chain crosses the membrane as a helical span at residues 656-676 (SLCVVLYVASSLFLMIMYFFF).

This sequence belongs to the quiescin-sulfhydryl oxidase (QSOX) family. Requires FAD as cofactor.

Its subcellular location is the membrane. The enzyme catalyses 2 R'C(R)SH + O2 = R'C(R)S-S(R)CR' + H2O2. Its function is as follows. Catalyzes the oxidation of sulfhydryl groups in peptide and protein thiols to disulfides with the reduction of oxygen to hydrogen peroxide. May contribute to disulfide bond formation in a variety of secreted proteins. This Mus musculus (Mouse) protein is Sulfhydryl oxidase 2 (Qsox2).